The primary structure comprises 451 residues: PTS system cellobiose-specific EIIC component (451 aa).

The region spanning 8–423 (LEDRVMPVAG…FIAFAIYYPF (416 aa)) is the PTS EIIC type-3 domain. Helical transmembrane passes span 31 to 51 (GIIL…VGFL), 72 to 92 (LLYP…FGVA), 104 to 124 (LSAG…QVPF), 138 to 158 (GIPV…LAIV), 187 to 207 (FVAL…RLIL), 227 to 247 (LSVL…VQLL), 250 to 270 (TGLH…LSLM), 293 to 313 (FFDL…ALTM), 347 to 367 (IVMN…LVVV), and 407 to 427 (ILQI…FSIW).

It localises to the cell membrane. Its function is as follows. The phosphoenolpyruvate-dependent sugar phosphotransferase system (sugar PTS), a major carbohydrate active transport system, catalyzes the phosphorylation of incoming sugar substrates concomitantly with their translocation across the cell membrane. The enzyme II CelABD PTS system is involved in cellobiose transport. This chain is PTS system cellobiose-specific EIIC component, found in Geobacillus stearothermophilus (Bacillus stearothermophilus).